We begin with the raw amino-acid sequence, 590 residues long: G protein-coupled receptor kinase 5 (590 aa).

The interval Met1–Thr185 is N-terminal. The tract at residues Gly20–Ile39 is interaction with calmodulin. Positions Tyr53 to Leu171 constitute an RGS domain. The Protein kinase domain maps to Phe186–Phe448. ATP is bound by residues Leu192–Val200 and Lys215. Residue Asp311 is the Proton acceptor of the active site. Residues Arg388–Glu395 carry the Nuclear localization signal motif. Residues Arg449 to Glu514 form the AGC-kinase C-terminal domain. Position 484 is a phosphoserine; by autocatalysis (Ser484). Thr485 carries the post-translational modification Phosphothreonine; by autocatalysis. Residues Gly531–Ser590 are disordered. Residues Asn538–Lys547 show a composition bias toward basic and acidic residues. The sufficient for membrane localization stretch occupies residues Pro546 to Ser565. Residues Ser563–Ser590 are compositionally biased toward low complexity. At Ser579 the chain carries Phosphoserine.

It belongs to the protein kinase superfamily. AGC Ser/Thr protein kinase family. GPRK subfamily. In terms of assembly, interacts with ST13 (via the C-terminus 303-319 AA). Interacts with TP53/p53. Interacts with HTR4 (via C-terminus 330-346 AA); this interaction is promoted by 5-HT (serotonin). Interacts with HDAC5. Interacts with GIT1. Post-translationally, autophosphorylated. Autophosphorylation may play a critical role in the regulation of GRK5 kinase activity. As to expression, highest levels in heart, placenta, lung &gt; skeletal muscle &gt; brain, liver, pancreas &gt; kidney.

The protein localises to the cytoplasm. The protein resides in the nucleus. It is found in the cell membrane. It carries out the reaction [G-protein-coupled receptor] + ATP = [G-protein-coupled receptor]-phosphate + ADP + H(+). Inhibited by calmodulin with an IC(50) of 50 nM. Calmodulin inhibits GRK5 association with receptor and phospholipid. Its function is as follows. Serine/threonine kinase that phosphorylates preferentially the activated forms of a variety of G-protein-coupled receptors (GPCRs). Such receptor phosphorylation initiates beta-arrestin-mediated receptor desensitization, internalization, and signaling events leading to their down-regulation. Phosphorylates a variety of GPCRs, including adrenergic receptors, muscarinic acetylcholine receptors (more specifically Gi-coupled M2/M4 subtypes), dopamine receptors and opioid receptors. In addition to GPCRs, also phosphorylates various substrates: Hsc70-interacting protein/ST13, TP53/p53, HDAC5, and arrestin-1/ARRB1. Phosphorylation of ARRB1 by GRK5 inhibits G-protein independent MAPK1/MAPK3 signaling downstream of 5HT4-receptors. Phosphorylation of HDAC5, a repressor of myocyte enhancer factor 2 (MEF2) leading to nuclear export of HDAC5 and allowing MEF2-mediated transcription. Phosphorylation of TP53/p53, a crucial tumor suppressor, inhibits TP53/p53-mediated apoptosis. Phosphorylation of ST13 regulates internalization of the chemokine receptor. Phosphorylates rhodopsin (RHO) (in vitro) and a non G-protein-coupled receptor, LRP6 during Wnt signaling (in vitro). The sequence is that of G protein-coupled receptor kinase 5 (GRK5) from Homo sapiens (Human).